A 421-amino-acid polypeptide reads, in one-letter code: AA11 family lytic polysaccharide monooxygenase (421 aa).

The first 19 residues, 1 to 19, serve as a signal peptide directing secretion; the sequence is MFSKAFLSAALLGAAAVEG. Cu(+) contacts are provided by H20, H79, and E93. 3 disulfide bridges follow: C48/C162, C84/C110, and C201/C235. N117 is a glycosylation site (N-linked (GlcNAc...) asparagine). A disordered region spans residues 231–349; that stretch reads GSQACTGTPT…SSSSSSSGAL (119 aa). Residues 247–285 are compositionally biased toward low complexity; sequence TAGSSGSSGSSSGSSSGGSSSSAAGSGATAPPAPAVSST. Residues 304 to 314 show a composition bias toward polar residues; that stretch reads SPAQPTHTSAP. Residues 315–349 are compositionally biased toward low complexity; the sequence is SGGSSSGSGSSSGSNSGSSSGSSSSSSSSSSSGAL.

The protein belongs to the polysaccharide monooxygenase AA11 family. The cofactor is Cu(2+).

Lytic polysaccharide monooxygenase (LPMO) that depolymerizes chitin via the oxidation of scissile beta-(1-4)-glycosidic bonds, yielding C1 or C4 oxidation products. Catalysis by LPMOs requires the reduction of the active-site copper from Cu(II) to Cu(I) by a reducing agent and H(2)O(2) or O(2) as a cosubstrate. Active on chitin but has no activity on other substrates, including diverse mannans, cellulose and starch (data not shown). Primary chain cleavage yields predominantly aldonic acid oligosaccharides with even-numbered degrees of polymerization. This is AA11 family lytic polysaccharide monooxygenase from Aspergillus oryzae (strain ATCC 42149 / RIB 40) (Yellow koji mold).